We begin with the raw amino-acid sequence, 180 residues long: N-terminal acetyltransferase B complex catalytic subunit naa20 (180 aa).

The region spanning 2 to 156 (TDTRKFKATD…DSFDMRKPLS (155 aa)) is the N-acetyltransferase domain.

It belongs to the acetyltransferase family. As to quaternary structure, component of the N-terminal acetyltransferase B (NatB) complex.

The protein localises to the cytoplasm. The protein resides in the nucleus. The catalysed reaction is N-terminal L-methionyl-L-asparaginyl-[protein] + acetyl-CoA = N-terminal N(alpha)-acetyl-L-methionyl-L-asparaginyl-[protein] + CoA + H(+). It catalyses the reaction N-terminal L-methionyl-L-glutaminyl-[protein] + acetyl-CoA = N-terminal N(alpha)-acetyl-L-methionyl-L-glutaminyl-[protein] + CoA + H(+). It carries out the reaction N-terminal L-methionyl-L-aspartyl-[protein] + acetyl-CoA = N-terminal N(alpha)-acetyl-L-methionyl-L-aspartyl-[protein] + CoA + H(+). The enzyme catalyses N-terminal L-methionyl-L-glutamyl-[protein] + acetyl-CoA = N-terminal N(alpha)-acetyl-L-methionyl-L-glutamyl-[protein] + CoA + H(+). Functionally, catalytic subunit of the NatB N-terminal acetyltransferase, which catalyzes acetylation of the amino-terminal methionine residues of all proteins beginning with Met-Asp or Met-Glu and of some proteins beginning with Met-Asn, Met-Gln or Met-Met. In Schizosaccharomyces pombe (strain 972 / ATCC 24843) (Fission yeast), this protein is N-terminal acetyltransferase B complex catalytic subunit naa20 (naa20).